We begin with the raw amino-acid sequence, 70 residues long: Conotoxin AbVIC (70 aa).

The first 17 residues, 1–17 (VLIIAVLFLTACQLTTA), serve as a signal peptide directing secretion. Positions 18 to 41 (ETSSRGKQKHRALRSTDKNSKLTR) are excised as a propeptide. The segment at 19–41 (TSSRGKQKHRALRSTDKNSKLTR) is disordered. 3 disulfides stabilise this stretch: Cys43–Cys57, Cys50–Cys61, and Cys56–Cys68.

This sequence belongs to the conotoxin O1 superfamily. In terms of tissue distribution, expressed by the venom duct.

It is found in the secreted. The protein is Conotoxin AbVIC of Conus abbreviatus (Abbreviated cone).